A 353-amino-acid chain; its full sequence is Polyprenal reductase 2 (353 aa).

The next 6 membrane-spanning stretches (helical) occupy residues 11-31, 78-98, 175-195, 234-254, 291-308, and 313-335; these read PLLCFAWIAATLPIIAAALPI, FMHFYVVGVLATTILLLAIWF, MHIVGYLTGLFYYVAAPLSLA, PLLKLGWTQWIGAVIFIWGSL, YLAELVIYFGMLVASGAE, and WFLFIFLITNLSFAAVETYNWYL.

This sequence belongs to the steroid 5-alpha reductase family. Polyprenal reductase subfamily.

It localises to the cell membrane. It catalyses the reaction a di-trans,poly-cis-dolichal + NADP(+) = a di-trans,poly-cis-polyprenal + NADPH + H(+). The protein operates within protein modification; protein glycosylation. Functionally, plays a key role in early steps of protein N-linked glycosylation by being involved in the conversion of polyprenol into dolichol. Acts as a polyprenal reductase that mediates the reduction of polyprenal into dolichal in a NADP-dependent mechanism. Dolichols are required for the synthesis of dolichol-linked monosaccharides and the oligosaccharide precursor used for N-glycosylation. The protein is Polyprenal reductase 2 of Oryza sativa subsp. indica (Rice).